Here is a 453-residue protein sequence, read N- to C-terminus: Na(+)/H(+) antiporter NhaA (453 aa).

11 consecutive transmembrane segments (helical) span residues 22–42, 72–92, 108–128, 137–157, 166–186, 189–209, 218–238, 316–336, 343–363, 386–406, and 424–444; these read ASLL…SPWA, MLAF…GLEI, LLPI…YMLV, GAAI…GLLG, IFLT…IALF, GHIA…LYVG, LFFY…GIHP, PLVN…VTFG, LVNV…LGIF, LFGV…IANL, and LGVF…LKWV.

The protein belongs to the NhaA Na(+)/H(+) (TC 2.A.33) antiporter family.

Its subcellular location is the cell inner membrane. The enzyme catalyses Na(+)(in) + 2 H(+)(out) = Na(+)(out) + 2 H(+)(in). In terms of biological role, na(+)/H(+) antiporter that extrudes sodium in exchange for external protons. The chain is Na(+)/H(+) antiporter NhaA from Parabacteroides distasonis (strain ATCC 8503 / DSM 20701 / CIP 104284 / JCM 5825 / NCTC 11152).